A 710-amino-acid chain; its full sequence is Effector protein AvrPphD (710 aa).

Residues 1–15 are compositionally biased toward polar residues; the sequence is MNPLRSIQHNITTPP. Disordered regions lie at residues 1–36, 136–155, and 173–207; these read MNPL…HPKR, ISFD…SVLS, and SSSL…DSGS.

It localises to the secreted. Its function is as follows. Effector protein involved in non-host recognition and able to elicit hypersensitive response (HR). This Pseudomonas savastanoi pv. phaseolicola (Pseudomonas syringae pv. phaseolicola) protein is Effector protein AvrPphD (avrPphD).